The primary structure comprises 207 residues: Thiamine-phosphate synthase (207 aa).

Residues 36–40 and asparagine 68 each bind 4-amino-2-methyl-5-(diphosphooxymethyl)pyrimidine; that span reads QLRMK. The Mg(2+) site is built by aspartate 69 and aspartate 88. Serine 106 is a 4-amino-2-methyl-5-(diphosphooxymethyl)pyrimidine binding site. 132–134 is a 2-[(2R,5Z)-2-carboxy-4-methylthiazol-5(2H)-ylidene]ethyl phosphate binding site; the sequence is TNT. Position 135 (lysine 135) interacts with 4-amino-2-methyl-5-(diphosphooxymethyl)pyrimidine. Residues glycine 162 and 182 to 183 each bind 2-[(2R,5Z)-2-carboxy-4-methylthiazol-5(2H)-ylidene]ethyl phosphate; that span reads VS.

It belongs to the thiamine-phosphate synthase family. It depends on Mg(2+) as a cofactor.

The catalysed reaction is 2-[(2R,5Z)-2-carboxy-4-methylthiazol-5(2H)-ylidene]ethyl phosphate + 4-amino-2-methyl-5-(diphosphooxymethyl)pyrimidine + 2 H(+) = thiamine phosphate + CO2 + diphosphate. It catalyses the reaction 2-(2-carboxy-4-methylthiazol-5-yl)ethyl phosphate + 4-amino-2-methyl-5-(diphosphooxymethyl)pyrimidine + 2 H(+) = thiamine phosphate + CO2 + diphosphate. The enzyme catalyses 4-methyl-5-(2-phosphooxyethyl)-thiazole + 4-amino-2-methyl-5-(diphosphooxymethyl)pyrimidine + H(+) = thiamine phosphate + diphosphate. The protein operates within cofactor biosynthesis; thiamine diphosphate biosynthesis; thiamine phosphate from 4-amino-2-methyl-5-diphosphomethylpyrimidine and 4-methyl-5-(2-phosphoethyl)-thiazole: step 1/1. Its function is as follows. Condenses 4-methyl-5-(beta-hydroxyethyl)thiazole monophosphate (THZ-P) and 2-methyl-4-amino-5-hydroxymethyl pyrimidine pyrophosphate (HMP-PP) to form thiamine monophosphate (TMP). In Methanococcus maripaludis (strain C6 / ATCC BAA-1332), this protein is Thiamine-phosphate synthase.